A 499-amino-acid polypeptide reads, in one-letter code: Maturase K (499 aa).

Belongs to the intron maturase 2 family. MatK subfamily.

The protein resides in the plastid. It localises to the chloroplast. Functionally, usually encoded in the trnK tRNA gene intron. Probably assists in splicing its own and other chloroplast group II introns. The protein is Maturase K of Gymnocladus chinensis (Soap tree).